We begin with the raw amino-acid sequence, 375 residues long: Quinolinate synthase (375 aa).

Iminosuccinate-binding residues include H47 and S64. A [4Fe-4S] cluster-binding site is contributed by C110. Residues 144 to 146 (YVN) and S165 contribute to the iminosuccinate site. C235 is a [4Fe-4S] cluster binding site. Residues 261–263 (HPE) and T278 each bind iminosuccinate. C325 is a [4Fe-4S] cluster binding site.

Belongs to the quinolinate synthase family. Type 3 subfamily. It depends on [4Fe-4S] cluster as a cofactor.

It is found in the cytoplasm. It carries out the reaction iminosuccinate + dihydroxyacetone phosphate = quinolinate + phosphate + 2 H2O + H(+). The protein operates within cofactor biosynthesis; NAD(+) biosynthesis; quinolinate from iminoaspartate: step 1/1. Catalyzes the condensation of iminoaspartate with dihydroxyacetone phosphate to form quinolinate. This Herpetosiphon aurantiacus (strain ATCC 23779 / DSM 785 / 114-95) protein is Quinolinate synthase.